Reading from the N-terminus, the 872-residue chain is Alanine--tRNA ligase (872 aa).

Zn(2+)-binding residues include histidine 558, histidine 562, cysteine 660, and histidine 664.

It belongs to the class-II aminoacyl-tRNA synthetase family. Requires Zn(2+) as cofactor.

Its subcellular location is the cytoplasm. It catalyses the reaction tRNA(Ala) + L-alanine + ATP = L-alanyl-tRNA(Ala) + AMP + diphosphate. Functionally, catalyzes the attachment of alanine to tRNA(Ala) in a two-step reaction: alanine is first activated by ATP to form Ala-AMP and then transferred to the acceptor end of tRNA(Ala). Also edits incorrectly charged Ser-tRNA(Ala) and Gly-tRNA(Ala) via its editing domain. The polypeptide is Alanine--tRNA ligase (Chlamydia pneumoniae (Chlamydophila pneumoniae)).